Reading from the N-terminus, the 428-residue chain is 3-phosphoshikimate 1-carboxyvinyltransferase (428 aa).

Positions 22, 23, and 27 each coordinate 3-phosphoshikimate. Lys-22 lines the phosphoenolpyruvate pocket. Gly-96 and Arg-124 together coordinate phosphoenolpyruvate. Ser-171, Ser-172, Gln-173, Ser-198, Asp-311, and Lys-338 together coordinate 3-phosphoshikimate. Gln-173 is a binding site for phosphoenolpyruvate. Asp-311 serves as the catalytic Proton acceptor. Phosphoenolpyruvate-binding residues include Arg-342 and Arg-383.

The protein belongs to the EPSP synthase family. In terms of assembly, monomer.

The protein resides in the cytoplasm. It catalyses the reaction 3-phosphoshikimate + phosphoenolpyruvate = 5-O-(1-carboxyvinyl)-3-phosphoshikimate + phosphate. It participates in metabolic intermediate biosynthesis; chorismate biosynthesis. Its function is as follows. Catalyzes the transfer of the enolpyruvyl moiety of phosphoenolpyruvate (PEP) to the 5-hydroxyl of shikimate-3-phosphate (S3P) to produce enolpyruvyl shikimate-3-phosphate and inorganic phosphate. The sequence is that of 3-phosphoshikimate 1-carboxyvinyltransferase from Methanopyrus kandleri (strain AV19 / DSM 6324 / JCM 9639 / NBRC 100938).